The following is a 574-amino-acid chain: Golgin subfamily A member 6-like protein 4 (574 aa).

Over residues 1-11 (MWPQPRFPPHP) the composition is skewed to pro residues. Disordered regions lie at residues 1-77 (MWPQ…YGEG) and 491-552 (KELK…AAGG). Positions 51–62 (NGSSPDTATSGG) are enriched in polar residues. Residues 157 to 496 (SKVEQLQDET…EQQVKELKKS (340 aa)) adopt a coiled-coil conformation. The span at 491 to 504 (KELKKSGGAEEPRG) shows a compositional bias: basic and acidic residues. The span at 508 to 523 (AAAARPVAGAPVPQGA) shows a compositional bias: low complexity.

This sequence belongs to the GOLGA6 family.

In Homo sapiens (Human), this protein is Golgin subfamily A member 6-like protein 4 (GOLGA6L4).